The primary structure comprises 80 residues: MKLSGMFLLLSLALFCFLTGVFSQGGQVDCGEFQDPKVYCTRESNPHCGSDGQTYGNKCAFCKAIVKSGGKISLKHPGKC.

The signal sequence occupies residues 1 to 23 (MKLSGMFLLLSLALFCFLTGVFS). A Pyrrolidone carboxylic acid modification is found at glutamine 24. One can recognise a Kazal-like domain in the interval 24–80 (QGGQVDCGEFQDPKVYCTRESNPHCGSDGQTYGNKCAFCKAIVKSGGKISLKHPGKC). 3 disulfide bridges follow: cysteine 30-cysteine 62, cysteine 40-cysteine 59, and cysteine 48-cysteine 80.

It is found in the secreted. Serine protease inhibitor selective for kallikreins. Efficiently inhibits KLK4, KLK5, KLK6, KLK7, KLK12, KLK13 and KLK14. Doesn't inhibit KLK8. This is Serine protease inhibitor Kazal-type 6 (SPINK6) from Homo sapiens (Human).